The primary structure comprises 59 residues: Photosystem II reaction center protein K (59 aa).

The propeptide occupies 1 to 22; sequence MLNIFSLICLNSALYSSSFFFG. The chain crosses the membrane as a helical span at residues 30–50; it reads FLSPIVDFMPVIPLFFFLLAF.

PSII is composed of 1 copy each of membrane proteins PsbA, PsbB, PsbC, PsbD, PsbE, PsbF, PsbH, PsbI, PsbJ, PsbK, PsbL, PsbM, PsbT, PsbX, PsbY, PsbZ, Psb30/Ycf12, at least 3 peripheral proteins of the oxygen-evolving complex and a large number of cofactors. It forms dimeric complexes. This protein, PsbL and plastoquinone-9 are found in PSII dimers but not seen in PSII monomers.

Its subcellular location is the plastid. It is found in the chloroplast thylakoid membrane. In terms of biological role, one of the components of the core complex of photosystem II (PSII). PSII is a light-driven water:plastoquinone oxidoreductase that uses light energy to abstract electrons from H(2)O, generating O(2) and a proton gradient subsequently used for ATP formation. It consists of a core antenna complex that captures photons, and an electron transfer chain that converts photonic excitation into a charge separation. May be involved in PSII dimerization. One of the components of the core complex of photosystem II (PSII). PSII is a light-driven water:plastoquinone oxidoreductase that uses light energy to abstract electrons from H(2)O, generating O(2) and a proton gradient subsequently used for ATP formation. It consists of a core antenna complex that captures photons, and an electron transfer chain that converts photonic excitation into a charge separation. The protein is Photosystem II reaction center protein K of Spinacia oleracea (Spinach).